Here is a 1164-residue protein sequence, read N- to C-terminus: DNA-directed RNA polymerase 132 kDa polypeptide (1164 aa).

It belongs to the RNA polymerase beta chain family. The DNA-dependent RNA polymerase used for intermediate and late genes expression consists of eight subunits (147) kDa, (133) kDa, (35) kDa, (30) kDa, (22) kDa, (19) kDa, (18) kDa and (7) kDa totalling more than 500 kDa in mass. The same holoenzyme, with the addition of the transcription-specificity factor RAP94, is used for early gene expression.

The protein localises to the virion. The enzyme catalyses RNA(n) + a ribonucleoside 5'-triphosphate = RNA(n+1) + diphosphate. Functionally, part of the DNA-dependent RNA polymerase which catalyzes the transcription of viral DNA into RNA using the four ribonucleoside triphosphates as substrates. Responsible for the transcription of early, intermediate and late genes. DNA-dependent RNA polymerase associates with the early transcription factor (ETF), itself composed of D6 and A7, thereby allowing the early genes transcription. Late transcription, and probably also intermediate transcription, require newly synthesized RNA polymerase. In Oryctolagus cuniculus (Rabbit), this protein is DNA-directed RNA polymerase 132 kDa polypeptide (RPO132).